Reading from the N-terminus, the 180-residue chain is O-acetyl-ADP-ribose deacetylase (180 aa).

The Macro domain maps to 1–175; that stretch reads MKPQIEVVVG…LYQRLLIQRG (175 aa). Substrate is bound by residues 11–12, Asn-25, 33–35, and 122–126; these read DI, GVD, and STGVY. The Proton acceptor role is filled by Asp-35.

Belongs to the MacroD-type family. YmdB subfamily. Homodimer. Interacts with RNase III.

The catalysed reaction is 3''-O-acetyl-ADP-D-ribose + H2O = ADP-D-ribose + acetate + H(+). The enzyme catalyses 2''-O-acetyl-ADP-D-ribose + H2O = ADP-D-ribose + acetate + H(+). Functionally, deacetylates O-acetyl-ADP ribose to yield ADP-ribose and free acetate. Down-regulates ribonuclease 3 (RNase III) activity. Acts by interacting directly with the region of the ribonuclease that is required for dimerization/activation. The chain is O-acetyl-ADP-ribose deacetylase from Enterobacter sp. (strain 638).